The following is a 598-amino-acid chain: Elongation factor 4 (598 aa).

The 178-residue stretch at 4 to 181 folds into the tr-type G domain; the sequence is SKIRNFSIIA…AVIEKIPAPK (178 aa). Residues 16-21 and 128-131 each bind GTP; these read DHGKST and NKID.

Belongs to the TRAFAC class translation factor GTPase superfamily. Classic translation factor GTPase family. LepA subfamily.

The protein resides in the cell membrane. It carries out the reaction GTP + H2O = GDP + phosphate + H(+). Its function is as follows. Required for accurate and efficient protein synthesis under certain stress conditions. May act as a fidelity factor of the translation reaction, by catalyzing a one-codon backward translocation of tRNAs on improperly translocated ribosomes. Back-translocation proceeds from a post-translocation (POST) complex to a pre-translocation (PRE) complex, thus giving elongation factor G a second chance to translocate the tRNAs correctly. Binds to ribosomes in a GTP-dependent manner. The protein is Elongation factor 4 of Mycoplasma mobile (strain ATCC 43663 / 163K / NCTC 11711) (Mesomycoplasma mobile).